We begin with the raw amino-acid sequence, 297 residues long: Nucleotide-binding protein BMA10229_A1510 (297 aa).

Residue 8–15 (GISGSGKS) coordinates ATP. 57–60 (DARS) is a GTP binding site.

This sequence belongs to the RapZ-like family.

In terms of biological role, displays ATPase and GTPase activities. This chain is Nucleotide-binding protein BMA10229_A1510, found in Burkholderia mallei (strain NCTC 10229).